We begin with the raw amino-acid sequence, 177 residues long: MASSMMASTAAVARAGPAQSSMVAPFNGLRSSVAFPATRKANNDLSTLPSNGGRVSCMQVWPPEGLKKFETLSYLPPLSVEDLAKEVDYLLRNDWVPCIEFSKEGFVYRENHASPGYYDGRYWTMWKLPMFGCTDASQVIAEVEEAKKAYPEYFVRIIGFDNKRQVQCISFIAYKPT.

The transit peptide at 1–56 (MASSMMASTAAVARAGPAQSSMVAPFNGLRSSVAFPATRKANNDLSTLPSNGGRVS) directs the protein to the chloroplast.

The protein belongs to the RuBisCO small chain family. In terms of assembly, heterohexadecamer of 8 large and 8 small subunits.

It localises to the plastid. The protein localises to the chloroplast. In terms of biological role, ruBisCO catalyzes two reactions: the carboxylation of D-ribulose 1,5-bisphosphate, the primary event in carbon dioxide fixation, as well as the oxidative fragmentation of the pentose substrate. Both reactions occur simultaneously and in competition at the same active site. Although the small subunit is not catalytic it is essential for maximal activity. In Lemna gibba (Swollen duckweed), this protein is Ribulose bisphosphate carboxylase small subunit, chloroplastic 5.